The sequence spans 196 residues: Inosine triphosphate pyrophosphatase 2 (196 aa).

ITP is bound at residue 20–25 (TGNDGK). Glu48 is a binding site for Mg(2+). ITP is bound by residues Lys61, 77-78 (DT), Lys94, 153-156 (FGWD), Lys177, and 182-183 (PR).

The protein belongs to the HAM1 NTPase family. As to quaternary structure, homodimer. Mg(2+) is required as a cofactor. Mn(2+) serves as cofactor.

The protein resides in the cytoplasm. The catalysed reaction is ITP + H2O = IMP + diphosphate + H(+). The enzyme catalyses dITP + H2O = dIMP + diphosphate + H(+). It carries out the reaction XTP + H2O = XMP + diphosphate + H(+). Functionally, pyrophosphatase that hydrolyzes non-canonical purine nucleotides such as inosine triphosphate (ITP), deoxyinosine triphosphate (dITP) or xanthosine 5'-triphosphate (XTP) to their respective monophosphate derivatives. The enzyme does not distinguish between the deoxy- and ribose forms. Probably excludes non-canonical purines from RNA and DNA precursor pools, thus preventing their incorporation into RNA and DNA and avoiding chromosomal lesions. The chain is Inosine triphosphate pyrophosphatase 2 from Trypanosoma cruzi (strain CL Brener).